The sequence spans 471 residues: Alpha-galactosidase 6 (471 aa).

The signal sequence occupies residues 1-18 (MFAFYFLTACISLKGVFG). C42 and C74 form a disulfide bridge. D72 and D73 together coordinate substrate. N105 carries N-linked (GlcNAc...) asparagine glycosylation. C121 and C151 are disulfide-bonded. A substrate-binding site is contributed by K147. D149 serves as the catalytic Nucleophile. N175 carries N-linked (GlcNAc...) asparagine glycosylation. Residue R205 coordinates substrate. D209 (proton donor) is an active-site residue. 2 disulfides stabilise this stretch: C221–C237 and C223–C230. Q251 is a substrate binding site. 6 N-linked (GlcNAc...) asparagine glycosylation sites follow: N270, N370, N403, N422, N435, and N454.

This sequence belongs to the glycosyl hydrolase 27 family. As to quaternary structure, homotetramer.

It is found in the secreted. The enzyme catalyses Hydrolysis of terminal, non-reducing alpha-D-galactose residues in alpha-D-galactosides, including galactose oligosaccharides, galactomannans and galactolipids.. In Saccharomyces cerevisiae (Baker's yeast), this protein is Alpha-galactosidase 6 (MEL6).